The chain runs to 281 residues: 2-dehydro-3-deoxyphosphooctonate aldolase (281 aa).

Belongs to the KdsA family.

The protein localises to the cytoplasm. The catalysed reaction is D-arabinose 5-phosphate + phosphoenolpyruvate + H2O = 3-deoxy-alpha-D-manno-2-octulosonate-8-phosphate + phosphate. It functions in the pathway carbohydrate biosynthesis; 3-deoxy-D-manno-octulosonate biosynthesis; 3-deoxy-D-manno-octulosonate from D-ribulose 5-phosphate: step 2/3. The protein operates within bacterial outer membrane biogenesis; lipopolysaccharide biosynthesis. This is 2-dehydro-3-deoxyphosphooctonate aldolase from Azotobacter vinelandii (strain DJ / ATCC BAA-1303).